Here is a 141-residue protein sequence, read N- to C-terminus: Large ribosomal subunit protein bL17 (141 aa).

It belongs to the bacterial ribosomal protein bL17 family. In terms of assembly, part of the 50S ribosomal subunit. Contacts protein L32.

The sequence is that of Large ribosomal subunit protein bL17 from Chlamydia trachomatis serovar D (strain ATCC VR-885 / DSM 19411 / UW-3/Cx).